We begin with the raw amino-acid sequence, 396 residues long: Pinosylvin synthase 2 (396 aa).

Residue 60–63 (KFKR) coordinates substrate. Residue C170 is part of the active site. Residues L273 and 311–313 (GGR) each bind substrate.

This sequence belongs to the thiolase-like superfamily. Chalcone/stilbene synthases family. Homodimer.

It localises to the cytoplasm. It catalyses the reaction (E)-cinnamoyl-CoA + 3 malonyl-CoA + 3 H(+) = (E)-pinosylvin + 4 CO2 + 4 CoA. It carries out the reaction 3-phenylpropanoyl-CoA + 3 malonyl-CoA + 3 H(+) = dihydropinosylvin + 4 CO2 + 4 CoA. It participates in phytoalexin biosynthesis; pinosylvin biosynthesis. Functionally, catalyzes the production of pinosylvin from cinnamoyl-CoA and malonyl-CoA, and dihydropinosylvin from dihydrocinnamoyl-CoA. The sequence is that of Pinosylvin synthase 2 from Pinus strobus (Eastern white pine).